Here is a 273-residue protein sequence, read N- to C-terminus: MQIVHTPRELKEARIALKGSVGFVPTMGALHQGHLSLIEKSKEHNDYTIVSVFVNPTQFLPGEDFEKYPRRYEADKKICELAGVDILFMPQPDTIYSEDEVLVKAPHQKGYVLEGHFRPGHFDGVLQVVNKLFHIVLPTRAYFGKKDAQQLYLIQKMVQDFFMDIEIVPCEIVRDNDGLALSSRNVYLSDAERKKALLISKSLKRAAKMVQSGILDIQEIQKEMQNILQDLKVEYIAFVDRDFRPLQKIQIGKTIILVAAYVGSTRLIDNIWL.

An ATP-binding site is contributed by 27-34; sequence MGALHQGH. His-34 serves as the catalytic Proton donor. A (R)-pantoate-binding site is contributed by Gln-58. Gln-58 provides a ligand contact to beta-alanine. ATP is bound at residue 144–147; the sequence is GKKD. Residue Gln-150 coordinates (R)-pantoate. ATP-binding positions include Val-173 and 181 to 184; that span reads LSSR.

Belongs to the pantothenate synthetase family. In terms of assembly, homodimer.

The protein localises to the cytoplasm. It catalyses the reaction (R)-pantoate + beta-alanine + ATP = (R)-pantothenate + AMP + diphosphate + H(+). The protein operates within cofactor biosynthesis; (R)-pantothenate biosynthesis; (R)-pantothenate from (R)-pantoate and beta-alanine: step 1/1. Its function is as follows. Catalyzes the condensation of pantoate with beta-alanine in an ATP-dependent reaction via a pantoyl-adenylate intermediate. The sequence is that of Pantothenate synthetase from Nitratiruptor sp. (strain SB155-2).